The chain runs to 320 residues: Ribose-phosphate pyrophosphokinase (320 aa).

41–43 (NDN) is an ATP binding site. Residues H134 and D175 each contribute to the Mg(2+) site. The active site involves K198. D-ribose 5-phosphate is bound by residues R200 and D224.

It belongs to the ribose-phosphate pyrophosphokinase family. Class I subfamily. As to quaternary structure, homohexamer. Requires Mg(2+) as cofactor.

The protein resides in the cytoplasm. It carries out the reaction D-ribose 5-phosphate + ATP = 5-phospho-alpha-D-ribose 1-diphosphate + AMP + H(+). Its pathway is metabolic intermediate biosynthesis; 5-phospho-alpha-D-ribose 1-diphosphate biosynthesis; 5-phospho-alpha-D-ribose 1-diphosphate from D-ribose 5-phosphate (route I): step 1/1. Its function is as follows. Involved in the biosynthesis of the central metabolite phospho-alpha-D-ribosyl-1-pyrophosphate (PRPP) via the transfer of pyrophosphoryl group from ATP to 1-hydroxyl of ribose-5-phosphate (Rib-5-P). This is Ribose-phosphate pyrophosphokinase from Deinococcus radiodurans (strain ATCC 13939 / DSM 20539 / JCM 16871 / CCUG 27074 / LMG 4051 / NBRC 15346 / NCIMB 9279 / VKM B-1422 / R1).